Here is a 307-residue protein sequence, read N- to C-terminus: Fructose-bisphosphate aldolase (307 aa).

Ser-49 serves as a coordination point for D-glyceraldehyde 3-phosphate. Asp-82 functions as the Proton donor in the catalytic mechanism. Zn(2+)-binding residues include His-83, Asp-104, Glu-134, and His-180. Dihydroxyacetone phosphate is bound at residue Gly-181. His-210 contributes to the Zn(2+) binding site. Residues 211 to 213 (GAS) and 253 to 256 (NTDT) contribute to the dihydroxyacetone phosphate site.

The protein belongs to the class II fructose-bisphosphate aldolase family. Homodimer. Zn(2+) is required as a cofactor.

It carries out the reaction beta-D-fructose 1,6-bisphosphate = D-glyceraldehyde 3-phosphate + dihydroxyacetone phosphate. The protein operates within carbohydrate degradation; glycolysis; D-glyceraldehyde 3-phosphate and glycerone phosphate from D-glucose: step 4/4. Its function is as follows. Catalyzes the aldol condensation of dihydroxyacetone phosphate (DHAP or glycerone-phosphate) with glyceraldehyde 3-phosphate (G3P) to form fructose 1,6-bisphosphate (FBP) in gluconeogenesis and the reverse reaction in glycolysis. The polypeptide is Fructose-bisphosphate aldolase (fba) (Helicobacter pylori (strain ATCC 700392 / 26695) (Campylobacter pylori)).